A 314-amino-acid polypeptide reads, in one-letter code: Deacetoxycephalosporin C synthase (314 aa).

A Fe2OG dioxygenase domain is found at 156-269; that stretch reads DCEPLLRLRY…RTSSVFFLRP (114 aa).

Belongs to the iron/ascorbate-dependent oxidoreductase family. Requires Fe cation as cofactor. L-ascorbate is required as a cofactor.

The enzyme catalyses penicillin N + 2-oxoglutarate + O2 = deacetoxycephalosporin C + succinate + CO2 + H2O. It functions in the pathway antibiotic biosynthesis; cephalosporin C biosynthesis. In terms of biological role, catalyzes the step from penicillin N to deacetoxy-cephalosporin C. This is Deacetoxycephalosporin C synthase (cefE) from Amycolatopsis lactamdurans (Nocardia lactamdurans).